A 363-amino-acid polypeptide reads, in one-letter code: Endopolygalacturonase B (363 aa).

Positions M1–A20 are cleaved as a signal peptide. The propeptide occupies V21–R28. A disulfide bridge links C31 with C46. 6 PbH1 repeats span residues S158–S187, S188–S209, G210–S230, V239–T260, V268–Q290, and T302–G347. N162 carries an N-linked (GlcNAc...) asparagine glycan. Catalysis depends on D202, which acts as the Proton donor. C204 and C220 are joined by a disulfide. H224 is a catalytic residue. 2 disulfide bridges follow: C330-C335 and C354-C363. The N-linked (GlcNAc...) asparagine glycan is linked to N356.

It belongs to the glycosyl hydrolase 28 family.

The protein localises to the secreted. It catalyses the reaction (1,4-alpha-D-galacturonosyl)n+m + H2O = (1,4-alpha-D-galacturonosyl)n + (1,4-alpha-D-galacturonosyl)m.. Functionally, involved in maceration and soft-rotting of plant tissue. Hydrolyzes the 1,4-alpha glycosidic bonds of de-esterified pectate in the smooth region of the plant cell wall. The protein is Endopolygalacturonase B (pgaB) of Aspergillus oryzae (strain ATCC 42149 / RIB 40) (Yellow koji mold).